The chain runs to 39 residues: Photosystem II reaction center protein L (39 aa).

The helical transmembrane segment at 18–38 threads the bilayer; sequence SLYLGLLLVAVLGILFSSYFF.

This sequence belongs to the PsbL family. As to quaternary structure, PSII is composed of 1 copy each of membrane proteins PsbA, PsbB, PsbC, PsbD, PsbE, PsbF, PsbH, PsbI, PsbJ, PsbK, PsbL, PsbM, PsbT, PsbX, PsbY, PsbZ, Psb30/Ycf12, peripheral proteins PsbO, CyanoQ (PsbQ), PsbU, PsbV and a large number of cofactors. It forms dimeric complexes.

The protein localises to the cellular thylakoid membrane. One of the components of the core complex of photosystem II (PSII). PSII is a light-driven water:plastoquinone oxidoreductase that uses light energy to abstract electrons from H(2)O, generating O(2) and a proton gradient subsequently used for ATP formation. It consists of a core antenna complex that captures photons, and an electron transfer chain that converts photonic excitation into a charge separation. This subunit is found at the monomer-monomer interface and is required for correct PSII assembly and/or dimerization. The sequence is that of Photosystem II reaction center protein L from Microcystis aeruginosa (strain NIES-843 / IAM M-2473).